Consider the following 1323-residue polypeptide: DNA-directed RNA polymerase subunit beta' (1323 aa).

The Zn(2+) site is built by C60, C62, C75, and C78. Mg(2+) contacts are provided by D535, D537, and D539. Zn(2+) is bound by residues C894, C977, C984, and C987.

This sequence belongs to the RNA polymerase beta' chain family. In terms of assembly, the RNAP catalytic core consists of 2 alpha, 1 beta, 1 beta' and 1 omega subunit. When a sigma factor is associated with the core the holoenzyme is formed, which can initiate transcription. Mg(2+) is required as a cofactor. The cofactor is Zn(2+).

It carries out the reaction RNA(n) + a ribonucleoside 5'-triphosphate = RNA(n+1) + diphosphate. In terms of biological role, DNA-dependent RNA polymerase catalyzes the transcription of DNA into RNA using the four ribonucleoside triphosphates as substrates. The protein is DNA-directed RNA polymerase subunit beta' of Corynebacterium urealyticum (strain ATCC 43042 / DSM 7109).